A 289-amino-acid chain; its full sequence is Thiosulfate sulfurtransferase (289 aa).

The 119-residue stretch at 24–142 (VGAGLRVLDA…WVKEGHPVTA (119 aa)) folds into the Rhodanese 1 domain. The segment at 143-158 (EPSQPAEAVFKAKLDK) is hinge. Residues 172–284 (GSKKFQVVDS…WFHRAPPQYK (113 aa)) enclose the Rhodanese 2 domain. Arg-186 contacts substrate. The active-site Cysteine persulfide intermediate is the Cys-244. Lys-246 lines the substrate pocket.

In terms of assembly, monomer. In terms of tissue distribution, expressed in numerous tissues.

It is found in the mitochondrion matrix. It carries out the reaction thiosulfate + hydrogen cyanide = thiocyanate + sulfite + 2 H(+). In terms of biological role, together with MRPL18, acts as a mitochondrial import factor for the cytosolic 5S rRNA. Only the nascent unfolded cytoplasmic form is able to bind to the 5S rRNA. Formation of iron-sulfur complexes and cyanide detoxification. The sequence is that of Thiosulfate sulfurtransferase (TST) from Gallus gallus (Chicken).